The chain runs to 320 residues: Zygote arrest protein 1 (320 aa).

Disordered stretches follow at residues Glu106 to Tyr130 and Asp155 to Ser208. The 3CxxC-type zinc finger occupies Lys222–Gly305.

Belongs to the ZAR1 family.

Its subcellular location is the cytoplasm. The protein localises to the cytoplasmic ribonucleoprotein granule. Functionally, mRNA-binding protein required for maternal mRNA storage, translation and degradation during oocyte maturation. Probably promotes formation of some phase-separated membraneless compartment that stores maternal mRNAs in oocytes: acts by undergoing liquid-liquid phase separation upon binding to maternal mRNAs. Binds to the 3'-UTR of maternal mRNAs, inhibiting their translation. The protein is Zygote arrest protein 1 of Takifugu rubripes (Japanese pufferfish).